The chain runs to 450 residues: Phosphoglucosamine mutase (450 aa).

S104 (phosphoserine intermediate) is an active-site residue. 4 residues coordinate Mg(2+): S104, D245, D247, and D249. At S104 the chain carries Phosphoserine.

Belongs to the phosphohexose mutase family. Mg(2+) serves as cofactor. Post-translationally, activated by phosphorylation.

The enzyme catalyses alpha-D-glucosamine 1-phosphate = D-glucosamine 6-phosphate. Its function is as follows. Catalyzes the conversion of glucosamine-6-phosphate to glucosamine-1-phosphate. The chain is Phosphoglucosamine mutase from Phenylobacterium zucineum (strain HLK1).